Consider the following 133-residue polypeptide: DNA-directed RNA polymerases I and III subunit RPAC2 (133 aa).

M1 is modified (N-acetylmethionine).

The protein belongs to the archaeal Rpo11/eukaryotic RPB11/RPC19 RNA polymerase subunit family. As to quaternary structure, component of the RNA polymerase I and RNA polymerase III complexes consisting of at least 13 and 17 subunits, respectively. Pol I complex consists of a ten-subunit catalytic core composed of POLR1A/RPA1, POLR1B/RPA2, POLR1C/RPAC1, POLR1D/RPAC2, POLR1H/RPA12, POLR2E/RPABC1, POLR2F/RPABC2, POLR2H/RPABC3, POLR2K/RPABC4 and POLR2L/RPABC5; a mobile stalk subunit POLR1F/RPA43 protruding from the core and additional subunits homologous to general transcription factors POLR1E/RPA49 and POLR1G/RPA34. Part of Pol I pre-initiation complex (PIC), in which Pol I core assembles with RRN3 and promoter-bound UTBF and SL1/TIF-IB complex. Pol III complex consists of a ten-subunit catalytic core composed of POLR3A/RPC1, POLR3B/RPC2, POLR1C/RPAC1, POLR1D/RPAC2, POLR3K/RPC10, POLR2E/RPABC1, POLR2F/RPABC2, POLR2H/RPABC3, POLR2K/RPABC4 and POLR2L/RPABC5; a mobile stalk composed of two subunits POLR3H/RPC8 and CRCP/RPC9, protruding from the core and functioning primarily in transcription initiation; and additional subunits homologous to general transcription factors of the RNA polymerase II machinery, POLR3C/RPC3-POLR3F/RPC6-POLR3G/RPC7 heterotrimer required for transcription initiation and POLR3D/RPC4-POLR3E/RPC5 heterodimer involved in both transcription initiation and termination.

The protein localises to the nucleus. It is found in the nucleolus. Its function is as follows. DNA-dependent RNA polymerase catalyzes the transcription of DNA into RNA using the four ribonucleoside triphosphates as substrates. Common component of RNA polymerases I and III which synthesize ribosomal RNA precursors and short non-coding RNAs including 5S rRNA, snRNAs, tRNAs and miRNAs, respectively. The chain is DNA-directed RNA polymerases I and III subunit RPAC2 from Homo sapiens (Human).